The sequence spans 341 residues: L-threonine 3-dehydrogenase (341 aa).

Residue cysteine 38 coordinates Zn(2+). Active-site charge relay system residues include threonine 40 and histidine 43. Residues histidine 63, glutamate 64, cysteine 93, cysteine 96, cysteine 99, and cysteine 107 each coordinate Zn(2+). Residues isoleucine 175, aspartate 195, arginine 200, 262 to 264 (LGI), and 286 to 287 (IY) each bind NAD(+).

The protein belongs to the zinc-containing alcohol dehydrogenase family. As to quaternary structure, homotetramer. It depends on Zn(2+) as a cofactor.

It is found in the cytoplasm. The enzyme catalyses L-threonine + NAD(+) = (2S)-2-amino-3-oxobutanoate + NADH + H(+). It participates in amino-acid degradation; L-threonine degradation via oxydo-reductase pathway; glycine from L-threonine: step 1/2. Its function is as follows. Catalyzes the NAD(+)-dependent oxidation of L-threonine to 2-amino-3-ketobutyrate. This is L-threonine 3-dehydrogenase from Alteromonas mediterranea (strain DSM 17117 / CIP 110805 / LMG 28347 / Deep ecotype).